A 1519-amino-acid polypeptide reads, in one-letter code: Putative lipoprotein YghJ (1519 aa).

The N-terminal stretch at 1–23 (MNKKFKYKKSLLAAILSATLLAG) is a signal peptide. 2 disordered regions span residues 22-107 (AGCD…GATC) and 226-247 (NAATDKAPSTHTSPVVPVTTPG). Cysteine 24 carries N-palmitoyl cysteine lipidation. The S-diacylglycerol cysteine moiety is linked to residue cysteine 24. Low complexity predominate over residues 31-42 (SSSDTPPVDSGT). Pro residues predominate over residues 51–77 (DPTPNPEPTPEPTPDPEPTPEPIPDPE). Polar residues predominate over residues 97-107 (GGSQRVTGATC). Positions 234–247 (STHTSPVVPVTTPG) are enriched in low complexity. Residues 1080 to 1380 (GNMQSTGLWA…MYAQLKEWAE (301 aa)) form the Peptidase M60 domain. Residues 1497–1519 (DLPKPEQGPETINQVTEHKMSAE) form a disordered region.

To V.cholerae AcfD (VC_0845).

Its subcellular location is the cell membrane. Its function is as follows. May be a substrate of the type II secretion system beta (T2SS-beta). The chain is Putative lipoprotein YghJ (yghJ) from Escherichia coli O78:H11 (strain H10407 / ETEC).